Reading from the N-terminus, the 125-residue chain is Small ribosomal subunit protein uS13 (125 aa).

Belongs to the universal ribosomal protein uS13 family. In terms of assembly, part of the 30S ribosomal subunit. Forms a loose heterodimer with protein S19. Forms two bridges to the 50S subunit in the 70S ribosome.

Functionally, located at the top of the head of the 30S subunit, it contacts several helices of the 16S rRNA. In the 70S ribosome it contacts the 23S rRNA (bridge B1a) and protein L5 of the 50S subunit (bridge B1b), connecting the 2 subunits; these bridges are implicated in subunit movement. Contacts the tRNAs in the A and P-sites. This is Small ribosomal subunit protein uS13 from Rickettsia africae (strain ESF-5).